The chain runs to 232 residues: Phosphatidylserine decarboxylase proenzyme (232 aa).

Residue Ser190 is the Schiff-base intermediate with substrate; via pyruvic acid of the active site. Position 190 is a pyruvic acid (Ser); by autocatalysis (Ser190).

This sequence belongs to the phosphatidylserine decarboxylase family. PSD-A subfamily. As to quaternary structure, heterodimer of a large membrane-associated beta subunit and a small pyruvoyl-containing alpha subunit. Requires pyruvate as cofactor. Is synthesized initially as an inactive proenzyme. Formation of the active enzyme involves a self-maturation process in which the active site pyruvoyl group is generated from an internal serine residue via an autocatalytic post-translational modification. Two non-identical subunits are generated from the proenzyme in this reaction, and the pyruvate is formed at the N-terminus of the alpha chain, which is derived from the carboxyl end of the proenzyme. The post-translation cleavage follows an unusual pathway, termed non-hydrolytic serinolysis, in which the side chain hydroxyl group of the serine supplies its oxygen atom to form the C-terminus of the beta chain, while the remainder of the serine residue undergoes an oxidative deamination to produce ammonia and the pyruvoyl prosthetic group on the alpha chain.

The protein localises to the cell membrane. It catalyses the reaction a 1,2-diacyl-sn-glycero-3-phospho-L-serine + H(+) = a 1,2-diacyl-sn-glycero-3-phosphoethanolamine + CO2. Its pathway is phospholipid metabolism; phosphatidylethanolamine biosynthesis; phosphatidylethanolamine from CDP-diacylglycerol: step 2/2. Functionally, catalyzes the formation of phosphatidylethanolamine (PtdEtn) from phosphatidylserine (PtdSer). This is Phosphatidylserine decarboxylase proenzyme from Bartonella bacilliformis (strain ATCC 35685 / KC583 / Herrer 020/F12,63).